A 223-amino-acid polypeptide reads, in one-letter code: MNNPAMTIKGEQAKKQLIAAALAQFGEYGMNATTREIAAQAGQNIAAITYYFGSKEDLYLACAQWIADFIGEQFRPHAEEAERLFAQPQPDRAAIRELILRACRNMIKLLTQDDTVNLSKFISREQLSPTAAYHLVHEQVISPLHSHLTRLIAAWTGCDANDTRMILHTHALIGEILAFRLGKETILLRTGWTAFDEEKTELINQTVTCHIDLILQGLSQRSL.

An HTH tetR-type domain is found at 11-70 (EQAKKQLIAAALAQFGEYGMNATTREIAAQAGQNIAAITYYFGSKEDLYLACAQWIADFI). A DNA-binding region (H-T-H motif) is located at residues 33-52 (TTREIAAQAGQNIAAITYYF).

The protein resides in the cytoplasm. Functionally, regulates transcription of the cecR-ybhGFSR operon and the rhlE gene, which altogether are involved in the control of sensitivity to cefoperazone and chloramphenicol. Represses the cecR-ybhGFSR operon and activates the rhlE operon. Acts by binding to a palindromic sequence within the intergenic spacer located between these two divergently transcribed operons. This chain is HTH-type transcriptional dual regulator CecR, found in Shigella flexneri.